The sequence spans 190 residues: Zinc metalloproteinase/disintegrin (190 aa).

The Peptidase M12B domain maps to 1 to 11 (NHNPECIVNEP). The region spanning 19–105 (PPVCGNELLE…ECPADVFHKN (87 aa)) is the Disintegrin domain. Residues V21, N24, L26, E28, E31, and D34 each contribute to the Ca(2+) site. 6 cysteine pairs are disulfide-bonded: C33–C51, C35–C46, C45–C68, C59–C65, C64–C90, and C77–C97. The D/ECD-tripeptide motif lies at 83 to 85 (ECD). Ca(2+) is bound by residues D85, P86, E88, D100, and V101. A propeptide spanning residues 104–190 (KNGQPCLDNY…DNSPGQNGPC (87 aa)) is cleaved from the precursor.

This sequence belongs to the venom metalloproteinase (M12B) family. P-III subfamily. As to quaternary structure, monomer. Zn(2+) serves as cofactor. In terms of tissue distribution, expressed by the venom gland.

It localises to the secreted. Impairs hemostasis in the envenomed animal. Functionally, inhibits platelet aggregation induced by ADP, thrombin, platelet-activating factor and collagen. Acts by inhibiting fibrinogen interaction with platelet receptors GPIIb/GPIIIa (ITGA2B/ITGB3). This chain is Zinc metalloproteinase/disintegrin, found in Gloydius brevicauda (Korean slamosa snake).